Here is a 142-residue protein sequence, read N- to C-terminus: Putative pre-16S rRNA nuclease (142 aa).

Belongs to the YqgF nuclease family.

It is found in the cytoplasm. Functionally, could be a nuclease involved in processing of the 5'-end of pre-16S rRNA. This Staphylococcus saprophyticus subsp. saprophyticus (strain ATCC 15305 / DSM 20229 / NCIMB 8711 / NCTC 7292 / S-41) protein is Putative pre-16S rRNA nuclease.